Reading from the N-terminus, the 250-residue chain is Transcriptional activator protein EchR (250 aa).

Residues 173–238 enclose the HTH luxR-type domain; it reads KSQEPNIFSQ…HAIRLGVEMN (66 aa). Residues 197 to 216 constitute a DNA-binding region (H-T-H motif); the sequence is YQEIALILGITTSTVKFHIG.

It belongs to the autoinducer-regulated transcriptional regulatory protein family.

In terms of biological role, functions as a potential ohlL-responsive transcriptional regulator. The protein is Transcriptional activator protein EchR (echR) of Dickeya chrysanthemi (Pectobacterium chrysanthemi).